The primary structure comprises 96 residues: Small ribosomal subunit protein uS19 (96 aa).

The protein belongs to the universal ribosomal protein uS19 family.

Protein S19 forms a complex with S13 that binds strongly to the 16S ribosomal RNA. The chain is Small ribosomal subunit protein uS19 from Gemmatimonas aurantiaca (strain DSM 14586 / JCM 11422 / NBRC 100505 / T-27).